A 1403-amino-acid polypeptide reads, in one-letter code: DNA-directed RNA polymerase subunit beta' (1403 aa).

Residues cysteine 70, cysteine 72, cysteine 85, and cysteine 88 each coordinate Zn(2+). Positions 461, 463, and 465 each coordinate Mg(2+). Zn(2+) is bound by residues cysteine 816, cysteine 890, cysteine 897, and cysteine 900.

This sequence belongs to the RNA polymerase beta' chain family. As to quaternary structure, the RNAP catalytic core consists of 2 alpha, 1 beta, 1 beta' and 1 omega subunit. When a sigma factor is associated with the core the holoenzyme is formed, which can initiate transcription. The cofactor is Mg(2+). Requires Zn(2+) as cofactor.

It carries out the reaction RNA(n) + a ribonucleoside 5'-triphosphate = RNA(n+1) + diphosphate. Functionally, DNA-dependent RNA polymerase catalyzes the transcription of DNA into RNA using the four ribonucleoside triphosphates as substrates. In Dechloromonas aromatica (strain RCB), this protein is DNA-directed RNA polymerase subunit beta'.